We begin with the raw amino-acid sequence, 486 residues long: MTTTAEKTDRPGKPGSSDTSGRVVRVTGPVVDVEFPRGSIPELFNALHAEITFESLAKTLTLEVAQHLGDNLVRTISLQPTDGLVRGVEVIDTGRSISVPVGEGVKGHVFNALGDCLDEPGYGEKFEHWSIHRKPPAFEELEPRTEMLETGLKVVDLLTPYVRGGKIALFGGAGVGKTVLIQEMINRIARNFGGTSVFAGVGERTREGNDLWVELAEANVLKDTALVFGQMDEPPGTRMRVALSALTMAEWFRDEQGQDVLLFIDNIFRFTQAGSEVSTLLGRMPSAVGYQPTLADEMGELQERITSTRGRSITSMQAVYVPADDYTDPAPATTFAHLDATTELSRAVFSKGIFPAVDPLASSSTILDPSVVGDEHYRVAQEVIRILQRYKDLQDIIAILGIDELSEEDKQLVNRARRIERFLSQNMMAAEQFTGQPGSTVPVKETIEAFDRLCKGDFDHVPEQAFFLIGGLDDLAKKAESLGAKL.

The segment covering 1-12 (MTTTAEKTDRPG) has biased composition (basic and acidic residues). Positions 1–22 (MTTTAEKTDRPGKPGSSDTSGR) are disordered. ATP is bound at residue 171–178 (GGAGVGKT).

The protein belongs to the ATPase alpha/beta chains family. F-type ATPases have 2 components, CF(1) - the catalytic core - and CF(0) - the membrane proton channel. CF(1) has five subunits: alpha(3), beta(3), gamma(1), delta(1), epsilon(1). CF(0) has three main subunits: a(1), b(2) and c(9-12). The alpha and beta chains form an alternating ring which encloses part of the gamma chain. CF(1) is attached to CF(0) by a central stalk formed by the gamma and epsilon chains, while a peripheral stalk is formed by the delta and b chains.

It localises to the cell membrane. The catalysed reaction is ATP + H2O + 4 H(+)(in) = ADP + phosphate + 5 H(+)(out). In terms of biological role, produces ATP from ADP in the presence of a proton gradient across the membrane. The catalytic sites are hosted primarily by the beta subunits. The polypeptide is ATP synthase subunit beta (Mycobacterium tuberculosis (strain ATCC 25177 / H37Ra)).